We begin with the raw amino-acid sequence, 327 residues long: Acyl-CoA desaturase (327 aa).

The Cytoplasmic portion of the chain corresponds to 1–39 (MPDREIKSPIWHPEPGTVEDVFDHTYKEKEGPKPPTVIV). A helical membrane pass occupies residues 40 to 60 (WRNVILMSLLHLGALYGLFLF). Asn42 is a binding site for substrate. Over 61-64 (PSAR) the chain is Lumenal. The chain crosses the membrane as a helical span at residues 65–85 (ALTWIWFFGCLLFSALGITAG). Topologically, residues 86-184 (AHRLWSHRSY…DKVVMFQRRF (99 aa)) are cytoplasmic. Fe cation is bound by residues His87 and His92. The Histidine box-1 motif lies at 87–92 (HRLWSH). Asn115, Arg122, and Asp123 together coordinate substrate. Fe cation contacts are provided by His124, His127, and His128. The Histidine box-2 motif lies at 124-128 (HRVHH). Arg155 and Lys156 together coordinate substrate. A helical membrane pass occupies residues 185–204 (YKPSVLLMCFFVPTFVPWYV). The Lumenal segment spans residues 205–208 (WGES). Residues 209–230 (LWVAYFVPALLRYALVLNATWL) form a helical membrane-spanning segment. Trp229 provides a ligand contact to substrate. The Cytoplasmic segment spans residues 231-327 (VNSAAHMWGN…RTGDGSHWSG (97 aa)). The Fe cation site is built by His236, His265, His268, and His269. Residues 265–269 (HNYHH) carry the Histidine box-3 motif.

The protein belongs to the fatty acid desaturase type 1 family. Fe(2+) is required as a cofactor.

The protein resides in the endoplasmic reticulum membrane. It catalyses the reaction octadecanoyl-CoA + 2 Fe(II)-[cytochrome b5] + O2 + 2 H(+) = (9Z)-octadecenoyl-CoA + 2 Fe(III)-[cytochrome b5] + 2 H2O. In terms of biological role, stearoyl-CoA desaturase that utilizes O(2) and electrons from reduced cytochrome b5 to introduce the first double bond into saturated fatty acyl-CoA substrates. Has high specificity and catalyzes the insertion of a cis double bond at the delta-9 position into fatty acyl-CoA substrates including palmitoyl-CoA and stearoyl-CoA. Contributes to the biosynthesis of membrane phospholipids, cholesterol esters and triglycerides. The protein is Acyl-CoA desaturase of Cyprinus carpio (Common carp).